Here is a 232-residue protein sequence, read N- to C-terminus: 2-C-methyl-D-erythritol 4-phosphate cytidylyltransferase (232 aa).

This sequence belongs to the IspD/TarI cytidylyltransferase family. IspD subfamily.

It catalyses the reaction 2-C-methyl-D-erythritol 4-phosphate + CTP + H(+) = 4-CDP-2-C-methyl-D-erythritol + diphosphate. It participates in isoprenoid biosynthesis; isopentenyl diphosphate biosynthesis via DXP pathway; isopentenyl diphosphate from 1-deoxy-D-xylulose 5-phosphate: step 2/6. Functionally, catalyzes the formation of 4-diphosphocytidyl-2-C-methyl-D-erythritol from CTP and 2-C-methyl-D-erythritol 4-phosphate (MEP). The chain is 2-C-methyl-D-erythritol 4-phosphate cytidylyltransferase from Shewanella frigidimarina (strain NCIMB 400).